A 267-amino-acid chain; its full sequence is Meiosis-specific protein ISC10 (267 aa).

A compositionally biased stretch (basic and acidic residues) spans 1–13; that stretch reads MDVDERLHQDENQ. The disordered stretch occupies residues 1–26; it reads MDVDERLHQDENQTHPFSQKKSSSFL. A compositionally biased stretch (polar residues) spans 14–25; the sequence is THPFSQKKSSSF.

Functionally, indispensable for spore formation. The chain is Meiosis-specific protein ISC10 (ISC10) from Saccharomyces cerevisiae (strain ATCC 204508 / S288c) (Baker's yeast).